The primary structure comprises 500 residues: GTPase Der (500 aa).

EngA-type G domains follow at residues 3-166 (PVVA…MEEL) and 211-384 (IKLA…VSAT). GTP contacts are provided by residues 9–16 (GRPNVGKS), 56–60 (DTGGI), 118–121 (NKID), 217–224 (GRPNVGKS), 264–268 (DTAGV), and 329–332 (NKWD). The KH-like domain maps to 385 to 469 (KRVGTSVLTR…PIRIQFQNSE (85 aa)). The interval 468–500 (SENPFEDRGGKLTMSQERQRKRLLGAVKNRNKK) is disordered. Positions 486 to 500 (QRKRLLGAVKNRNKK) are enriched in basic residues.

This sequence belongs to the TRAFAC class TrmE-Era-EngA-EngB-Septin-like GTPase superfamily. EngA (Der) GTPase family. Associates with the 50S ribosomal subunit.

In terms of biological role, GTPase that plays an essential role in the late steps of ribosome biogenesis. This Aliivibrio fischeri (strain ATCC 700601 / ES114) (Vibrio fischeri) protein is GTPase Der.